The following is a 445-amino-acid chain: POU domain, class 3, transcription factor 2 (445 aa).

Disordered stretches follow at residues 64–173 and 203–269; these read ALSH…WRSA and LGAG…TPTS. Positions 67–90 are enriched in gly residues; the sequence is HGGGGGGGGGGGGGGGGGGGGGDG. Low complexity-rich tracts occupy residues 125 to 151 and 163 to 173; these read QQQH…QQQQ and HHPGPGAWRSA. Residues 217–226 are compositionally biased toward basic and acidic residues; it reads LRDAHDEPHH. The segment covering 227–237 has biased composition (basic residues); sequence ADHHPHPHSHP. Positions 239–253 are enriched in pro residues; it reads QQPPPPPPPQGPPGH. One can recognise a POU-specific domain in the interval 264–338; it reads EDTPTSDDLE…LLNKWLEEAD (75 aa). Serine 343 bears the Phosphoserine mark. The segment at residues 356 to 415 is a DNA-binding region (homeobox); that stretch reads KRKKRTSIEVSVKGALESHFLKCPKPSAQEITSLADSLQLEKEVVRVWFCNRRQKEKRMT. A disordered region spans residues 411–445; the sequence is EKRMTPPGGTLPGAEDVYGGSRDTPPHHGVQTPVQ.

The protein belongs to the POU transcription factor family. Class-3 subfamily. In terms of assembly, interacts with PQBP1. Interaction with ISL1. In terms of tissue distribution, expressed specifically in the neuroectodermal cell lineage.

It is found in the nucleus. Its function is as follows. Transcription factor that plays a key role in neuronal differentiation. Binds preferentially to the recognition sequence which consists of two distinct half-sites, ('GCAT') and ('TAAT'), separated by a non-conserved spacer region of 0, 2, or 3 nucleotides. Acts as a transcriptional activator when binding cooperatively with SOX4, SOX11, or SOX12 to gene promoters. The combination of three transcription factors, ASCL1, POU3F2/BRN2 and MYT1L, is sufficient to reprogram fibroblasts and other somatic cells into induced neuronal (iN) cells in vitro. Acts downstream of ASCL1, accessing chromatin that has been opened by ASCL1, and promotes transcription of neuronal genes. The protein is POU domain, class 3, transcription factor 2 (Pou3f2) of Mus musculus (Mouse).